A 100-amino-acid chain; its full sequence is Aspartyl/glutamyl-tRNA(Asn/Gln) amidotransferase subunit C (100 aa).

It belongs to the GatC family. In terms of assembly, heterotrimer of A, B and C subunits.

The enzyme catalyses L-glutamyl-tRNA(Gln) + L-glutamine + ATP + H2O = L-glutaminyl-tRNA(Gln) + L-glutamate + ADP + phosphate + H(+). It carries out the reaction L-aspartyl-tRNA(Asn) + L-glutamine + ATP + H2O = L-asparaginyl-tRNA(Asn) + L-glutamate + ADP + phosphate + 2 H(+). Allows the formation of correctly charged Asn-tRNA(Asn) or Gln-tRNA(Gln) through the transamidation of misacylated Asp-tRNA(Asn) or Glu-tRNA(Gln) in organisms which lack either or both of asparaginyl-tRNA or glutaminyl-tRNA synthetases. The reaction takes place in the presence of glutamine and ATP through an activated phospho-Asp-tRNA(Asn) or phospho-Glu-tRNA(Gln). The polypeptide is Aspartyl/glutamyl-tRNA(Asn/Gln) amidotransferase subunit C (Streptococcus pneumoniae (strain P1031)).